A 303-amino-acid polypeptide reads, in one-letter code: Probable 5-dehydro-4-deoxyglucarate dehydratase (303 aa).

This sequence belongs to the DapA family.

It carries out the reaction 5-dehydro-4-deoxy-D-glucarate + H(+) = 2,5-dioxopentanoate + CO2 + H2O. Its pathway is carbohydrate acid metabolism; D-glucarate degradation; 2,5-dioxopentanoate from D-glucarate: step 2/2. The polypeptide is Probable 5-dehydro-4-deoxyglucarate dehydratase (Pseudomonas putida (strain GB-1)).